Reading from the N-terminus, the 305-residue chain is Target of rapamycin complex subunit LST8-1 (305 aa).

WD repeat units lie at residues methionine 1–threonine 30, tyrosine 33–valine 71, serine 76–glutamate 115, glutamate 117–glutamate 156, glutamate 160–threonine 199, alanine 209–valine 248, and glycine 251–glutamine 292.

Belongs to the WD repeat LST8 family. In terms of assembly, the target of rapamycin complex 1 (TORC1) is composed of at least RAPTOR, LST8 and TOR. Interacts with TOR. Expressed in the root central cylinder, root tips, emerging lateral roots, vasculature of cotyledons, leaf stomata, leaf stipules, anthers, pollen, filaments, and vasculature of petals and sepals.

The protein resides in the endosome. Component of TORC1 complex, which is an essential cell growth regulator that controls plant development. Acts by activating transcription, protein synthesis and ribosome biogenesis, and inhibiting mRNA degradation and autophagy. Involved in regulating amino acid accumulation and the synthesis of myo-inositol and raffinose during plant adaptation to long days. Involved in the regulation of plant growth and abscisic acid (ABA) accumulation. Acts as a positive regulation of the ABA biosynthetic genes ZEP, NCED3 and AAO3, and negative regulator of the ABA catabolic genes CYP707A2 and CYP707A3. The sequence is that of Target of rapamycin complex subunit LST8-1 from Arabidopsis thaliana (Mouse-ear cress).